The following is a 262-amino-acid chain: LysM and putative peptidoglycan-binding domain-containing protein 3 (262 aa).

The Extracellular portion of the chain corresponds to 1–218; it reads MSGRIPNHGY…PYHGADWSLG (218 aa). In terms of domain architecture, LysM spans 70–114; the sequence is ISRDICEGDTLNSIALQYCCTVADLKRANNFLNEQDFFALRTIKI. A helical transmembrane segment spans residues 219 to 239; that stretch reads WWTAVAIMVFVGIITPLFYFL. At 240-262 the chain is on the cytoplasmic side; the sequence is YYEVLMKVNTSHTLNSIEKSGPS.

The protein resides in the cell membrane. It localises to the golgi apparatus. In terms of biological role, essential for Golgi structural integrity. The sequence is that of LysM and putative peptidoglycan-binding domain-containing protein 3 (lysmd3) from Xenopus tropicalis (Western clawed frog).